The following is a 445-amino-acid chain: GTPase Der (445 aa).

EngA-type G domains are found at residues 3 to 167 (PVIA…YAGQ) and 180 to 353 (VKIA…AAAM). GTP-binding positions include 9 to 16 (GRPNVGKS), 56 to 60 (DTGGF), 119 to 122 (NKAE), 186 to 193 (GRPNVGKS), 233 to 237 (DTAGL), and 298 to 301 (NKWD). In terms of domain architecture, KH-like spans 354–438 (AKLPTPKLTR…PLRIEFRSST (85 aa)).

It belongs to the TRAFAC class TrmE-Era-EngA-EngB-Septin-like GTPase superfamily. EngA (Der) GTPase family. Associates with the 50S ribosomal subunit.

Its function is as follows. GTPase that plays an essential role in the late steps of ribosome biogenesis. The protein is GTPase Der of Paraburkholderia phytofirmans (strain DSM 17436 / LMG 22146 / PsJN) (Burkholderia phytofirmans).